The chain runs to 220 residues: MAENQKIQQIDCTKVPEPTLRRLPWYLSNVKLLKQRGERFVSSTQISKEINIDASQIAKDLSYVNISGRTRVGYEVDALIEVLEHFLGFTEIHKAFLFGVGSLGGALLQDSGLKHFGLEIVAAFDVDPTLVGTNLNGIPIYHSDDFLKKMEEYDVQIGVLTVPIEIAQCITDMMVDGGIKAVWNFTPFRIRVPEDIVVQNTSLYAHLAVMFNRLNFNEIK.

The segment at residues 25 to 64 (WYLSNVKLLKQRGERFVSSTQISKEINIDASQIAKDLSYV) is a DNA-binding region (H-T-H motif). 99–104 (GVGSLG) is an NAD(+) binding site.

This sequence belongs to the transcriptional regulatory Rex family. In terms of assembly, homodimer.

Its subcellular location is the cytoplasm. Its function is as follows. Modulates transcription in response to changes in cellular NADH/NAD(+) redox state. This Bacteroides thetaiotaomicron (strain ATCC 29148 / DSM 2079 / JCM 5827 / CCUG 10774 / NCTC 10582 / VPI-5482 / E50) protein is Redox-sensing transcriptional repressor Rex.